The sequence spans 503 residues: TGF-beta receptor type-1 (503 aa).

Positions 1-29 (MEVAAGAPRSRLLLFVLAATATLAPEATA) are cleaved as a signal peptide. Residues 30–126 (FQCFCHLCTK…PPSGLGPVEL (97 aa)) are Extracellular-facing. Intrachain disulfides connect Cys-32-Cys-50, Cys-34-Cys-37, Cys-44-Cys-67, Cys-82-Cys-96, and Cys-97-Cys-102. N-linked (GlcNAc...) asparagine glycosylation is present at Asn-41. The chain crosses the membrane as a helical span at residues 127–147 (AAVIAGPVCFVCISLMLMVYI). At 148–503 (CHNRTVIHHR…QLSQQEGIKM (356 aa)) the chain is on the cytoplasmic side. Phosphoserine is present on Ser-165. The GS domain occupies 175 to 204 (TTLKDLIYDMTTSGSGSGLPLLVQRTIART). Phosphothreonine; by TGFBR2 is present on residues Thr-185 and Thr-186. 3 positions are modified to phosphoserine; by TGFBR2: Ser-187, Ser-189, and Ser-191. Residues 193-194 (LP) carry the FKBP1A-binding motif. The 291-residue stretch at 205–495 (IVLQESIGKG…LRIKKTLSQL (291 aa)) folds into the Protein kinase domain. Residues 211–219 (IGKGRFGEV) and Lys-232 each bind ATP. Asp-333 acts as the Proton acceptor in catalysis. A Glycyl lysine isopeptide (Lys-Gly) (interchain with G-Cter in SUMO) cross-link involves residue Lys-391.

The protein belongs to the protein kinase superfamily. TKL Ser/Thr protein kinase family. TGFB receptor subfamily. Homodimer; in the endoplasmic reticulum but also at the cell membrane. Heterohexamer; TGFB1, TGFB2 and TGFB3 homodimeric ligands assemble a functional receptor composed of two TGFBR1 and TGFBR2 heterodimers to form a ligand-receptor heterohexamer. The respective affinity of TGBRB1 and TGFBR2 for the ligands may modulate the kinetics of assembly of the receptor and may explain the different biological activities of TGFB1, TGFB2 and TGFB3. Component of a complex composed of TSC22D1 (via N-terminus), TGFBR1 and TGFBR2; the interaction between TSC22D1 and TGFBR1 is inhibited by SMAD7 and promoted by TGFB1. Interacts with CD109; inhibits TGF-beta receptor activation in keratinocytes. Interacts with RBPMS. Interacts (unphosphorylated) with FKBP1A; prevents TGFBR1 phosphorylation by TGFBR2 and stabilizes it in the inactive conformation. Interacts with SMAD2, SMAD3 and ZFYVE9; ZFYVE9 recruits SMAD2 and SMAD3 to the TGF-beta receptor. Interacts with TRAF6 and MAP3K7; induces MAP3K7 activation by TRAF6. Interacts with PARD6A; involved in TGF-beta induced epithelial to mesenchymal transition. Interacts with NEDD4L. Interacts with SMAD7, SMURF1 and SMURF2; SMAD7 recruits NEDD4L, SMURF1 and SMURF2 to the TGF-beta receptor. Interacts with USP15 and VPS39. Interacts with SDCBP (via C-terminus). Interacts with CAV1 and this interaction is impaired in the presence of SDCBP. Interacts with APPL1; interaction is TGF beta dependent; mediates trafficking of the TGFBR1 from the endosomes to the nucleus via microtubules in a TRAF6-dependent manner. Interacts with GPR50; this interaction promotes the constitutive activation of SMAD signaling pathway. It depends on Mg(2+) as a cofactor. Mn(2+) serves as cofactor. Post-translationally, phosphorylated at basal levels in the absence of ligand. Activated upon phosphorylation by TGFBR2, mainly in the GS domain. Phosphorylation in the GS domain abrogates FKBP1A-binding. In terms of processing, N-Glycosylated. Ubiquitinated; undergoes ubiquitination catalyzed by several E3 ubiquitin ligases including SMURF1, SMURF2 and NEDD4L2. Results in the proteasomal and/or lysosomal degradation of the receptor thereby negatively regulating its activity. Deubiquitinated by USP15, leading to stabilization of the protein and enhanced TGF-beta signal. Its ubiquitination and proteasome-mediated degradation is negatively regulated by SDCBP.

It is found in the cell membrane. It localises to the cell junction. Its subcellular location is the tight junction. The protein localises to the membrane raft. The protein resides in the cell surface. The catalysed reaction is L-threonyl-[receptor-protein] + ATP = O-phospho-L-threonyl-[receptor-protein] + ADP + H(+). It catalyses the reaction L-seryl-[receptor-protein] + ATP = O-phospho-L-seryl-[receptor-protein] + ADP + H(+). With respect to regulation, kept in an inactive conformation by FKBP1A preventing receptor activation in absence of ligand. CD109 is another inhibitor of the receptor. Its function is as follows. Transmembrane serine/threonine kinase forming with the TGF-beta type II serine/threonine kinase receptor, TGFBR2, the non-promiscuous receptor for the TGF-beta cytokines TGFB1, TGFB2 and TGFB3. Transduces the TGFB1, TGFB2 and TGFB3 signal from the cell surface to the cytoplasm and is thus regulating a plethora of physiological and pathological processes including cell cycle arrest in epithelial and hematopoietic cells, control of mesenchymal cell proliferation and differentiation, wound healing, extracellular matrix production, immunosuppression and carcinogenesis. The formation of the receptor complex composed of 2 TGFBR1 and 2 TGFBR2 molecules symmetrically bound to the cytokine dimer results in the phosphorylation and the activation of TGFBR1 by the constitutively active TGFBR2. Activated TGFBR1 phosphorylates SMAD2 which dissociates from the receptor and interacts with SMAD4. The SMAD2-SMAD4 complex is subsequently translocated to the nucleus where it modulates the transcription of the TGF-beta-regulated genes. This constitutes the canonical SMAD-dependent TGF-beta signaling cascade. Also involved in non-canonical, SMAD-independent TGF-beta signaling pathways. For instance, TGFBR1 induces TRAF6 autoubiquitination which in turn results in MAP3K7 ubiquitination and activation to trigger apoptosis. Also regulates epithelial to mesenchymal transition through a SMAD-independent signaling pathway through PARD6A phosphorylation and activation. This chain is TGF-beta receptor type-1 (TGFBR1), found in Sus scrofa (Pig).